The primary structure comprises 158 residues: MRKQVEIFTDGSCLGNPGPGGYGAILRYKQHERTFSAGYRLTTNNRMELMAAIVSLEALREHCIVTLSTDSQYVRQGITQWIHNWKKRGWKTAEKKPVKNVDLWQRLDAALSQHEIKWEWVKGHAGHPENERCDELARAAAMAPTLEDTGYQPEATAS.

In terms of domain architecture, RNase H type-1 spans 1–142 (MRKQVEIFTD…CDELARAAAM (142 aa)). Residues Asp10, Glu48, Asp70, and Asp134 each coordinate Mg(2+).

It belongs to the RNase H family. As to quaternary structure, monomer. Mg(2+) serves as cofactor.

It is found in the cytoplasm. It carries out the reaction Endonucleolytic cleavage to 5'-phosphomonoester.. In terms of biological role, endonuclease that specifically degrades the RNA of RNA-DNA hybrids. The sequence is that of Ribonuclease H from Cronobacter sakazakii (strain ATCC BAA-894) (Enterobacter sakazakii).